A 356-amino-acid chain; its full sequence is Phosphoserine aminotransferase (356 aa).

R41 lines the L-glutamate pocket. Pyridoxal 5'-phosphate-binding positions include 76-77, W102, T150, D169, and Q192; that span reads AS. An N6-(pyridoxal phosphate)lysine modification is found at K193. 234–235 serves as a coordination point for pyridoxal 5'-phosphate; sequence NT.

This sequence belongs to the class-V pyridoxal-phosphate-dependent aminotransferase family. SerC subfamily. Homodimer. Requires pyridoxal 5'-phosphate as cofactor.

The protein resides in the cytoplasm. It carries out the reaction O-phospho-L-serine + 2-oxoglutarate = 3-phosphooxypyruvate + L-glutamate. The enzyme catalyses 4-(phosphooxy)-L-threonine + 2-oxoglutarate = (R)-3-hydroxy-2-oxo-4-phosphooxybutanoate + L-glutamate. It functions in the pathway amino-acid biosynthesis; L-serine biosynthesis; L-serine from 3-phospho-D-glycerate: step 2/3. It participates in cofactor biosynthesis; pyridoxine 5'-phosphate biosynthesis; pyridoxine 5'-phosphate from D-erythrose 4-phosphate: step 3/5. Functionally, catalyzes the reversible conversion of 3-phosphohydroxypyruvate to phosphoserine and of 3-hydroxy-2-oxo-4-phosphonooxybutanoate to phosphohydroxythreonine. The protein is Phosphoserine aminotransferase of Flavobacterium johnsoniae (strain ATCC 17061 / DSM 2064 / JCM 8514 / BCRC 14874 / CCUG 350202 / NBRC 14942 / NCIMB 11054 / UW101) (Cytophaga johnsonae).